The primary structure comprises 480 residues: Ammonium transporter 3 member 3 (480 aa).

11 helical membrane passes run 31–51, 59–79, 135–155, 169–189, 198–218, 233–253, 265–287, 292–314, 318–337, 361–381, and 407–427; these read SATL…GSIV, SAFM…VWAY, MVYF…GSLL, LWIT…GFLF, GGYV…YWVG, ILLV…FNGG, AVLN…DVFF, SVIG…AGLV, AAIV…MMVL, GFLG…SLFL, and LFVT…ISLI.

The protein belongs to the ammonia transporter channel (TC 1.A.11.2) family.

The protein localises to the membrane. In terms of biological role, involved in ammonium transport. The chain is Ammonium transporter 3 member 3 (AMT3-3) from Oryza sativa subsp. japonica (Rice).